Consider the following 89-residue polypeptide: Small ribosomal subunit protein uS15 (89 aa).

Belongs to the universal ribosomal protein uS15 family. In terms of assembly, part of the 30S ribosomal subunit. Forms a bridge to the 50S subunit in the 70S ribosome, contacting the 23S rRNA.

Functionally, one of the primary rRNA binding proteins, it binds directly to 16S rRNA where it helps nucleate assembly of the platform of the 30S subunit by binding and bridging several RNA helices of the 16S rRNA. Its function is as follows. Forms an intersubunit bridge (bridge B4) with the 23S rRNA of the 50S subunit in the ribosome. The protein is Small ribosomal subunit protein uS15 of Streptococcus thermophilus (strain CNRZ 1066).